We begin with the raw amino-acid sequence, 117 residues long: MRVKGGSITRQRRRRWLKLAKGYWGHKSIGFKTAKQAVVKSWTYAFRDRKQRKRDFRKLWISRINAAARNQGISYSQLMHKIKQSNIEINRKMLAEMAIHHQSDFENIVKLAIAKSA.

It belongs to the bacterial ribosomal protein bL20 family.

Binds directly to 23S ribosomal RNA and is necessary for the in vitro assembly process of the 50S ribosomal subunit. It is not involved in the protein synthesizing functions of that subunit. This is Large ribosomal subunit protein bL20 from Mesomycoplasma hyopneumoniae (strain J / ATCC 25934 / NCTC 10110) (Mycoplasma hyopneumoniae).